The following is a 413-amino-acid chain: Chemotactic signal transduction system substrate-binding protein BasB (413 aa).

Residues 1-31 form the signal peptide; that stretch reads MHSTTRREWLGAIGATAATGLAGCAGVGGAG.

The protein resides in the cell membrane. Mediates chemotaxis towards five attractant amino acids (leucine, isoleucine, valine, methionine and cysteine). May function as a receptor that binds the amino acids and transduces a signal to BasT. Has probably no additional role in transport. The chain is Chemotactic signal transduction system substrate-binding protein BasB (basB) from Halobacterium salinarum (strain ATCC 29341 / DSM 671 / R1).